Reading from the N-terminus, the 640-residue chain is 1-deoxy-D-xylulose-5-phosphate synthase (640 aa).

Residues His-78 and 119 to 121 (GHS) each bind thiamine diphosphate. Residue Asp-151 participates in Mg(2+) binding. Thiamine diphosphate-binding positions include 152–153 (GA), Asn-180, Tyr-289, and Glu-371. Asn-180 provides a ligand contact to Mg(2+).

Belongs to the transketolase family. DXPS subfamily. In terms of assembly, homodimer. Requires Mg(2+) as cofactor. It depends on thiamine diphosphate as a cofactor.

The catalysed reaction is D-glyceraldehyde 3-phosphate + pyruvate + H(+) = 1-deoxy-D-xylulose 5-phosphate + CO2. It participates in metabolic intermediate biosynthesis; 1-deoxy-D-xylulose 5-phosphate biosynthesis; 1-deoxy-D-xylulose 5-phosphate from D-glyceraldehyde 3-phosphate and pyruvate: step 1/1. Catalyzes the acyloin condensation reaction between C atoms 2 and 3 of pyruvate and glyceraldehyde 3-phosphate to yield 1-deoxy-D-xylulose-5-phosphate (DXP). The chain is 1-deoxy-D-xylulose-5-phosphate synthase from Bartonella quintana (strain Toulouse) (Rochalimaea quintana).